The sequence spans 322 residues: Succinate/fumarate mitochondrial transporter (322 aa).

Solcar repeat units follow at residues 8–99 (SHPA…YRTL), 111–202 (GNTF…LKEF), and 212–303 (LPSW…VREH). Helical transmembrane passes span 11-31 (AINL…CHPL), 68-88 (FLAL…KMAI), 114-134 (FVAG…PMEV), 177-193 (GVSL…GANF), 219-235 (CIGL…NAPL), and 278-295 (GITP…VTFT).

It belongs to the mitochondrial carrier (TC 2.A.29) family.

The protein resides in the mitochondrion inner membrane. In terms of biological role, transports cytoplasmic succinate, derived from isocitrate by the action of isocitrate lyase in the cytosol, into the mitochondrial matrix in exchange for fumarate. The sequence is that of Succinate/fumarate mitochondrial transporter (SFC1) from Saccharomyces cerevisiae (strain ATCC 204508 / S288c) (Baker's yeast).